The chain runs to 195 residues: tRNA (pseudouridine(54)-N(1))-methyltransferase (195 aa).

Residue leucine 129 participates in S-adenosyl-L-methionine binding.

It belongs to the methyltransferase superfamily. TrmY family. As to quaternary structure, homodimer.

Its subcellular location is the cytoplasm. It catalyses the reaction pseudouridine(54) in tRNA + S-adenosyl-L-methionine = N(1)-methylpseudouridine(54) in tRNA + S-adenosyl-L-homocysteine + H(+). Specifically catalyzes the N1-methylation of pseudouridine at position 54 (Psi54) in tRNAs. This Methanocorpusculum labreanum (strain ATCC 43576 / DSM 4855 / Z) protein is tRNA (pseudouridine(54)-N(1))-methyltransferase.